The following is a 251-amino-acid chain: Octanoyltransferase (251 aa).

A BPL/LPL catalytic domain is found at alanine 56–serine 237. Substrate-binding positions include arginine 96–histidine 103, alanine 168–glycine 170, and glycine 181–serine 183. The Acyl-thioester intermediate role is filled by cysteine 199.

It belongs to the LipB family.

The protein resides in the cytoplasm. It catalyses the reaction octanoyl-[ACP] + L-lysyl-[protein] = N(6)-octanoyl-L-lysyl-[protein] + holo-[ACP] + H(+). It functions in the pathway protein modification; protein lipoylation via endogenous pathway; protein N(6)-(lipoyl)lysine from octanoyl-[acyl-carrier-protein]: step 1/2. Catalyzes the transfer of endogenously produced octanoic acid from octanoyl-acyl-carrier-protein onto the lipoyl domains of lipoate-dependent enzymes. Lipoyl-ACP can also act as a substrate although octanoyl-ACP is likely to be the physiological substrate. This is Octanoyltransferase from Burkholderia ambifaria (strain MC40-6).